The chain runs to 746 residues: Ring assembly protein 3 (746 aa).

It localises to the cytoplasm. In terms of biological role, essential for actinomyosin ring assembly during cytokinesis. Has a role, in conjunction with F-actin, in assembling myosin II-containing proteins, such as myo2, at the division site. This is Ring assembly protein 3 (rng3) from Schizosaccharomyces pombe (strain 972 / ATCC 24843) (Fission yeast).